Consider the following 457-residue polypeptide: Cysteine--tRNA ligase (457 aa).

A Zn(2+)-binding site is contributed by Cys-28. The 'HIGH' region signature appears at 30-40; the sequence is PTVYDTAHIGN. The Zn(2+) site is built by Cys-212, His-237, and Glu-241. A 'KMSKS' region motif is present at residues 270–274; it reads KMSKS. Lys-273 contributes to the ATP binding site.

This sequence belongs to the class-I aminoacyl-tRNA synthetase family. In terms of assembly, monomer. Zn(2+) is required as a cofactor.

The protein localises to the cytoplasm. It catalyses the reaction tRNA(Cys) + L-cysteine + ATP = L-cysteinyl-tRNA(Cys) + AMP + diphosphate. The polypeptide is Cysteine--tRNA ligase (Wolbachia pipientis wMel).